A 425-amino-acid chain; its full sequence is tRNA (guanine-N(7)-)-methyltransferase non-catalytic subunit wuho (425 aa).

Positions 67–102 are disordered; the sequence is ATCAGKEPGGKEQQLTKQPEEGGTTASGSGVTSTSV. The span at 88-102 shows a compositional bias: low complexity; the sequence is GGTTASGSGVTSTSV. 5 WD repeats span residues 97–138, 142–181, 185–224, 228–266, and 325–365; these read VTST…ARLL, PLARAASAVRFCSDSSSVLVTDKTGDCYQYDCVELEAPPR, GHLSVVYDILWSEDQQHIITCDRDDKIRVTNYPATFDIHS, GHREFVSGLALLTDKHIASASGDKTLRVWNYIQGKELLQ, and AGSW…PATS.

This sequence belongs to the WD repeat TRM82 family. Forms a heterodimer with the catalytic subunit Mettl1. Interacts with mei-P26 and weakly interacts with bgcn; required for the function or formation of the mei-P26-bgcn-bam-sxl complex. Interacts with nanos; may be involved in mei-P26-dependent derepression of the BMP signaling pathway. Interacts with Myc; the interaction may be mediated by mei-P26 and may be involved in the regulation of ribosome biogenesis. In terms of tissue distribution, in testis, it is present at high level in hub cells, a niche for germline stem cells of testis. Ubiquitously expressed in all testicular cells throughout spermatogenesis. Ubiquitously expressed in all germline and somatic cells of the ovary.

It localises to the nucleus. The protein localises to the cytoplasm. It participates in tRNA modification; N(7)-methylguanine-tRNA biosynthesis. Required for the Mettl1-dependent formation of N(7)-methylguanine at position 46 (m7G46) in tRNA. In the Mettl1-wuho methyltransferase complex, it is required to stabilize and induce conformational changes of the catalytic subunit. Required for binding of nanos mRNA and repression of translation by the mei-P26-bgcn-bam-sxl complex. May cooperate with mei-P26 and nanos to derepress the BMP signaling pathway. May cooperate with mei-P26 to suppress expression of a subset of microRNAs. May cooperate with mei-P26 to regulate bam expression levels in germline cells during gametogenesis. Required to promote mitosis to meiosis transition during gametogenesis. May regulate germline cell division in part by regulating ribosome biogenesis. In Drosophila yakuba (Fruit fly), this protein is tRNA (guanine-N(7)-)-methyltransferase non-catalytic subunit wuho.